The chain runs to 200 residues: MSLQLEKNLILELIPHFYSLGWMKFGSGNFCLKNNGYAICVKDRVQRDFITENDIVTFNLSNQSVTKDLVNWAYIFSWVLSNMDAVACIYSTSVAAVGASMYNEKFTTQSKEMIKGIPKGNPSAGYLCCFDTLEVPIIHNGDSKTILDELKKVIELYPQTCAVLIRGHGVIGWGATWEKSKTQMECYEYLFELDYKLKTL.

The protein belongs to the aldolase class II family. MtnB subfamily.

This chain is Methylthioribulose-1-phosphate dehydratase-like protein, found in Schizosaccharomyces pombe (strain 972 / ATCC 24843) (Fission yeast).